A 222-amino-acid chain; its full sequence is MIF4G domain-containing protein B (222 aa).

The MIF4G domain occupies 3 to 205 (NSSKEDYKIQ…LEILEFRAGG (203 aa)).

It belongs to the MIF4GD family. Interacts with eif4g1, eif4g2 and slbp; probably tethered by SLBP to the 3'-end of mRNAs ending with the histone stem-loop, it also interacts with eif4g1 which is bound to their 5'-end.

The protein resides in the cytoplasm. Its subcellular location is the nucleus. Its function is as follows. Functions in replication-dependent translation of histone mRNAs which differ from other eukaryotic mRNAs in that they do not end with a poly-A tail but a stem-loop. May participate in circularizing those mRNAs specifically enhancing their translation. The sequence is that of MIF4G domain-containing protein B (mif4gdb) from Danio rerio (Zebrafish).